The following is a 1122-amino-acid chain: Desmoglein-2 (1122 aa).

A signal peptide spans Met-1–Gly-28. Residues Leu-29 to Arg-54 constitute a propeptide that is removed on maturation. 4 Cadherin domains span residues Ala-55–Phe-164, Thr-165–Val-277, Glu-278–Val-398, and Val-397–Leu-504. At Ala-55–Ala-618 the chain is on the extracellular side. A glycan (N-linked (GlcNAc...) asparagine) is linked at Asn-117. Asn-314, Asn-467, and Asn-519 each carry an N-linked (GlcNAc...) asparagine glycan. The chain crosses the membrane as a helical span at residues Ala-619 to Ile-639. Over Cys-640 to Ser-1122 the chain is Cytoplasmic. 4 positions are modified to phosphoserine: Ser-685, Ser-706, Ser-709, and Ser-729. Thr-808 bears the Phosphothreonine mark. Ser-810, Ser-814, and Ser-819 each carry phosphoserine. Desmoglein repeat repeat units follow at residues Ala-885–Val-916, Ser-917–Lys-945, Gly-946–Tyr-971, Ala-972–Ile-995, Gln-996–Ser-1024, and Ile-1025–Leu-1055. The tract at residues Glu-913–Ala-932 is disordered. Residues Ser-914–Val-924 show a composition bias toward low complexity. A disordered region spans residues Leu-1089 to Ser-1122. A compositionally biased stretch (polar residues) spans Pro-1100–Ser-1122. Ser-1122 carries the post-translational modification Phosphoserine.

Interacts with PKP2. Interacts with CTNNB1; the interaction promotes localization of CTNNB1 at cell junctions thus reducing its nuclear localization and subsequent transcription of CTNNB1/TCF-target genes. Palmitoylated by ZDHHC5 at the plasma membrane. As to expression, expressed in undifferentiated pluripotent stem cells, expression decreases during differentiation (at protein level). Expressed by embryonic stem cells, expression is reduced during differentiation (at protein level). Expressed at the apical-lateral cell membrane of kidney tubular epithelial cells (at protein level). Expressed in epidermis and heart (at protein level). Expressed in the brain, spleen, lung, liver skeletal muscle, kidney and testis.

It localises to the cell membrane. It is found in the cell junction. The protein localises to the desmosome. Its subcellular location is the cytoplasm. Functionally, a component of desmosome cell-cell junctions which are required for positive regulation of cellular adhesion. Involved in the interaction of plaque proteins and intermediate filaments mediating cell-cell adhesion. Required for proliferation and viability of embryonic stem cells in the blastocyst, thereby crucial for progression of post-implantation embryonic development. Maintains pluripotency by regulating epithelial to mesenchymal transition/mesenchymal to epithelial transition (EMT/MET) via interacting with and sequestering CTNNB1 to sites of cell-cell contact, thereby reducing translocation of CTNNB1 to the nucleus and subsequent transcription of CTNNB1/TCF-target genes. Promotes pluripotency and the multi-lineage differentiation potential of hematopoietic stem cells. Plays a role in endothelial cell sprouting and elongation via mediating the junctional-association of cortical actin fibers and CDH5. Plays a role in limiting inflammatory infiltration and the apoptotic response to injury in kidney tubular epithelial cells, potentially via its role in maintaining cell-cell adhesion and the epithelial barrier. In Mus musculus (Mouse), this protein is Desmoglein-2 (Dsg2).